Here is a 359-residue protein sequence, read N- to C-terminus: Transcription factor MafA (359 aa).

Position 14 is a phosphoserine (S14). A Glycyl lysine isopeptide (Lys-Gly) (interchain with G-Cter in SUMO2) cross-link involves residue K32. 2 disordered regions span residues 40–105 (RFCH…VGGA) and 172–226 (GGGA…AGHH). Over residues 46–73 (PPGSLSSTPLSTPCSSVPSSPSFCAPSP) the composition is skewed to low complexity. S49 is modified (phosphoserine). Phosphothreonine occurs at positions 53 and 57. 2 positions are modified to phosphoserine: S61 and S65. The segment covering 74 to 84 (GTGGGAGGGGS) has biased composition (gly residues). The segment covering 181-209 (GHHHGAHHTAHHHHSAHHHHHHHHHHGGS) has biased composition (basic residues). The segment covering 210–224 (GHHGGGAGHGGGGAG) has biased composition (gly residues). Residues 260–285 (RLKQKRRTLKNRGYAQSCRFKRVQQR) form a basic motif region. The bZIP domain maps to 260–323 (RLKQKRRTLK…DLYKEKYEKL (64 aa)). The segment at 288–309 (LESEKCQLQSQVEQLKLEVGRL) is leucine-zipper. Residues 322 to 359 (KLAGRGGPGGAGGAGFPREPSPAQAGPGAAKGAPDFFL) are disordered. Residues 325–336 (GRGGPGGAGGAG) show a composition bias toward gly residues. Over residues 343–359 (PAQAGPGAAKGAPDFFL) the composition is skewed to low complexity.

The protein belongs to the bZIP family. Maf subfamily. In terms of assembly, forms homodimers. Interacts with NEUROD1 and PDX1. May interact with MAFB, FOS, JUN and PCAF. Post-translationally, ubiquitinated, leading to its degradation by the proteasome. In terms of processing, phosphorylated at tyrosines. As to expression, expressed in brain, lung, spleen, pancreas and kidney. In the pancreas, expressed in the insulin-producing beta-cells of the islets of Langerhans (at protein level). Also expressed in the eye.

It localises to the nucleus. Functionally, transcriptional factor that activates insulin gene expression. Acts synergistically with NEUROD1/BETA2 and PDX1. Binds the insulin enhancer C1/RIPE3b element. Binds to consensus TRE-type MARE 5'-TGCTGACTCAGCA-3' DNA sequence. The chain is Transcription factor MafA (Mafa) from Mus musculus (Mouse).